The chain runs to 206 residues: Small ribosomal subunit protein uS4c (206 aa).

The 59-residue stretch at 94–152 (MRLDNIVFRLGMAPTIPAARQLVNHRHILVNDFTVNIPSYSCKLGDKISVQKRFESKTN) folds into the S4 RNA-binding domain.

This sequence belongs to the universal ribosomal protein uS4 family. Part of the 30S ribosomal subunit. Contacts protein S5. The interaction surface between S4 and S5 is involved in control of translational fidelity.

The protein resides in the plastid. The protein localises to the chloroplast. One of the primary rRNA binding proteins, it binds directly to 16S rRNA where it nucleates assembly of the body of the 30S subunit. Its function is as follows. With S5 and S12 plays an important role in translational accuracy. The polypeptide is Small ribosomal subunit protein uS4c (rps4) (Chara vulgaris (Common stonewort)).